A 1561-amino-acid chain; its full sequence is Sterile alpha motif domain-containing protein 9-like (1561 aa).

In terms of domain architecture, SAM spans 14 to 79 (WTKEHVRKWV…RMYNKLISSP (66 aa)). The interval 78 to 157 (SPESHNQDSR…DNKPKPEQMS (80 aa)) is disordered. Composition is skewed to basic and acidic residues over residues 82–107 (HNQD…KNEE) and 142–153 (VTKDMEDNKPKP).

Interacts with EEA1.

It is found in the early endosome. The protein localises to the mitochondrion. Its function is as follows. May be involved in endosome fusion. Mediates down-regulation of growth factor signaling via internalization of growth factor receptors. The protein is Sterile alpha motif domain-containing protein 9-like (Samd9l) of Mus musculus (Mouse).